The following is a 623-amino-acid chain: tRNA uridine 5-carboxymethylaminomethyl modification enzyme MnmG (623 aa).

Residue 10–15 (GGGHAG) coordinates FAD. 269-283 (GPRYCPSIEDKIVRF) lines the NAD(+) pocket.

The protein belongs to the MnmG family. Homodimer. Heterotetramer of two MnmE and two MnmG subunits. FAD is required as a cofactor.

It is found in the cytoplasm. NAD-binding protein involved in the addition of a carboxymethylaminomethyl (cmnm) group at the wobble position (U34) of certain tRNAs, forming tRNA-cmnm(5)s(2)U34. The chain is tRNA uridine 5-carboxymethylaminomethyl modification enzyme MnmG from Rhizobium meliloti (strain 1021) (Ensifer meliloti).